Consider the following 259-residue polypeptide: Adenosylcobinamide-GDP ribazoletransferase (259 aa).

The next 6 membrane-spanning stretches (helical) occupy residues 27-47 (ITFLPLVVTVGALIGDSILYI), 51-71 (FSHLIASFLSISSIIIYNGLN), 100-120 (VGAGGIFAVIFVYGIAVLSLA), 124-144 (LYIGLVGILIGQVVSGSSMMI), 175-195 (FLAIPIIVSFIFSPLYVVIVA), and 219-239 (VIGFLGEFSRSLFIFMLIIIA).

Belongs to the CobS family. Requires Mg(2+) as cofactor.

Its subcellular location is the cell membrane. It carries out the reaction alpha-ribazole + adenosylcob(III)inamide-GDP = adenosylcob(III)alamin + GMP + H(+). The enzyme catalyses alpha-ribazole 5'-phosphate + adenosylcob(III)inamide-GDP = adenosylcob(III)alamin 5'-phosphate + GMP + H(+). It participates in cofactor biosynthesis; adenosylcobalamin biosynthesis; adenosylcobalamin from cob(II)yrinate a,c-diamide: step 7/7. Functionally, joins adenosylcobinamide-GDP and alpha-ribazole to generate adenosylcobalamin (Ado-cobalamin). Also synthesizes adenosylcobalamin 5'-phosphate from adenosylcobinamide-GDP and alpha-ribazole 5'-phosphate. This Thermoplasma volcanium (strain ATCC 51530 / DSM 4299 / JCM 9571 / NBRC 15438 / GSS1) protein is Adenosylcobinamide-GDP ribazoletransferase.